The chain runs to 598 residues: Arylsulfatase J (598 aa).

Positions 1–47 are cleaved as a signal peptide; that stretch reads MAPRDSAEPLPPLSPQAWAWSGKFLAMGALAGFSVLSLLTYGYLCWG. Ca(2+) is bound by residues D82, D83, and C120. C120 serves as the catalytic Nucleophile. C120 is modified (3-oxoalanine (Cys)). A glycan (N-linked (GlcNAc...) asparagine) is linked at N155. Position 174 (K174) interacts with substrate. H176 is an active-site residue. H267 serves as a coordination point for substrate. N304 and N316 each carry an N-linked (GlcNAc...) asparagine glycan. Ca(2+)-binding residues include D325 and N326. Substrate is bound at residue K343. 4 N-linked (GlcNAc...) asparagine glycosylation sites follow: N429, N495, N525, and N563. The tract at residues 532–598 is disordered; the sequence is RYPPKDPRSN…IKCHPSVATG (67 aa). Basic residues predominate over residues 559 to 583; it reads KKKSNKTKAKKMQKKKSKARMRKQL.

It belongs to the sulfatase family. Ca(2+) is required as a cofactor. Post-translationally, the conversion to 3-oxoalanine (also known as C-formylglycine, FGly), of a serine or cysteine residue in prokaryotes and of a cysteine residue in eukaryotes, is critical for catalytic activity.

Its subcellular location is the secreted. This Mus musculus (Mouse) protein is Arylsulfatase J (Arsj).